The chain runs to 305 residues: Oxygen-dependent coproporphyrinogen-III oxidase (305 aa).

Substrate is bound at residue Ser94. A divalent metal cation contacts are provided by His98 and His108. His108 (proton donor) is an active-site residue. Residue 110-112 participates in substrate binding; sequence NVR. A divalent metal cation contacts are provided by His147 and His177. The interval 242–277 is important for dimerization; it reads YVEFNLVYDRGTLFGLQTGGRTESILMSMPPLVRWE. Substrate is bound at residue 260–262; it reads GGR.

The protein belongs to the aerobic coproporphyrinogen-III oxidase family. Homodimer. It depends on a divalent metal cation as a cofactor.

It localises to the cytoplasm. The catalysed reaction is coproporphyrinogen III + O2 + 2 H(+) = protoporphyrinogen IX + 2 CO2 + 2 H2O. Its pathway is porphyrin-containing compound metabolism; protoporphyrin-IX biosynthesis; protoporphyrinogen-IX from coproporphyrinogen-III (O2 route): step 1/1. Functionally, involved in the heme biosynthesis. Catalyzes the aerobic oxidative decarboxylation of propionate groups of rings A and B of coproporphyrinogen-III to yield the vinyl groups in protoporphyrinogen-IX. The polypeptide is Oxygen-dependent coproporphyrinogen-III oxidase (Shewanella denitrificans (strain OS217 / ATCC BAA-1090 / DSM 15013)).